A 276-amino-acid polypeptide reads, in one-letter code: NADPH-dependent 7-cyano-7-deazaguanine reductase (276 aa).

80–82 serves as a coordination point for substrate; the sequence is VES. 82–83 is a binding site for NADPH; it reads SK. Cys183 (thioimide intermediate) is an active-site residue. Asp190 functions as the Proton donor in the catalytic mechanism. 222 to 223 provides a ligand contact to substrate; sequence HE. Residue 251-252 coordinates NADPH; that stretch reads RG.

Belongs to the GTP cyclohydrolase I family. QueF type 2 subfamily. As to quaternary structure, homodimer.

The protein resides in the cytoplasm. It catalyses the reaction 7-aminomethyl-7-carbaguanine + 2 NADP(+) = 7-cyano-7-deazaguanine + 2 NADPH + 3 H(+). It participates in tRNA modification; tRNA-queuosine biosynthesis. Functionally, catalyzes the NADPH-dependent reduction of 7-cyano-7-deazaguanine (preQ0) to 7-aminomethyl-7-deazaguanine (preQ1). This Burkholderia cenocepacia (strain HI2424) protein is NADPH-dependent 7-cyano-7-deazaguanine reductase.